A 28-amino-acid polypeptide reads, in one-letter code: Putative GDSL-motif lipase/hydrolase-like protein (28 aa).

The protein belongs to the 'GDSL' lipolytic enzyme family.

The sequence is that of Putative GDSL-motif lipase/hydrolase-like protein from Populus euphratica (Euphrates poplar).